A 56-amino-acid chain; its full sequence is Photosystem II reaction center X protein (56 aa).

A helical membrane pass occupies residues 27-47; the sequence is IGSFLAAGALIVAPAAAALIW.

This sequence belongs to the PsbX family. Type 2 subfamily. PSII consists of a core antenna complex that captures photons, and an electron transfer chain that converts photonic excitation into a charge separation. PSII forms dimeric complexes.

The protein resides in the cellular thylakoid membrane. Involved in the binding and/or turnover of quinones at the Q(B) site of Photosystem II. The chain is Photosystem II reaction center X protein from Prochlorococcus marinus (strain NATL2A).